Here is a 598-residue protein sequence, read N- to C-terminus: uncharacterized protein (598 aa).

Positions 1-19 (MSVPLRFSTPSSSPSASDN) are enriched in low complexity. 3 disordered regions span residues 1-54 (MSVP…MRPK), 139-176 (QKNQ…PNWK), and 194-279 (EAQL…ITMP). Over 1-313 (MSVPLRFSTP…CKIRHFFREG (313 aa)) the chain is Cytoplasmic. Residues 30–48 (ELDTFNTTDVPRRVNTTKA) are compositionally biased toward polar residues. A compositionally biased stretch (low complexity) spans 147-165 (RANSRVNSRANSRANSSVS). 2 stretches are compositionally biased toward polar residues: residues 218-242 (FSLQ…SSAI) and 255-276 (PRNN…SQDI). A helical transmembrane segment spans residues 314-334 (FAEFLGTLVLVVFGVGSNLQA). The Extracellular segment spans residues 335–346 (TVTNGAGGSFES). The helical transmembrane segment at 347-367 (LSFAWGFGCMLGVYIAGGISG) threads the bilayer. The Cytoplasmic segment spans residues 368–388 (GHVNPAVTISLAIFRKFPWYK). The short motif at 371–373 (NPA) is the NPA 1 element. A helical membrane pass occupies residues 389 to 409 (VPIYIFFQIWGAFFGGALAYG). Topologically, residues 410 to 444 (YHWSSITEFEGGKDIRTPATGGCLYTNPKPYVTWR) are extracellular. Residues 445–465 (NAFFDEFIGTAVLVGCLFAIL) form a helical membrane-spanning segment. Topologically, residues 466 to 473 (DDTNSPPT) are cytoplasmic. A helical membrane pass occupies residues 474–494 (QGMTAFIVGLLIAAIGMALGY). The Extracellular segment spans residues 495–532 (QTSFTLNPARDLGPRMFAWWIGYGPHSFHLYHWWWTWG). The NPA 2 motif lies at 501–503 (NPA). The helical transmembrane segment at 533–553 (AWGGTIGGGIAGGLIYDLVIF) threads the bilayer. The Cytoplasmic portion of the chain corresponds to 554–598 (TGPESPLNYPDNGFIDKKVHQITAKFEKEEEVENLEKTDSPIENN).

It belongs to the MIP/aquaporin (TC 1.A.8) family.

The protein resides in the membrane. This is an uncharacterized protein from Schizosaccharomyces pombe (strain 972 / ATCC 24843) (Fission yeast).